A 445-amino-acid polypeptide reads, in one-letter code: Methionine aminopeptidase 2-2 (445 aa).

Residues 1–92 (MAAQASEDLK…RVPISQLFPN (92 aa)) form a disordered region. Positions 18–33 (AGDSKAAAATAGQAEA) are enriched in low complexity. Over residues 34–46 (GEAEDDSDDDEVD) the composition is skewed to acidic residues. Residues 47 to 58 (GNAAPEGAASGA) show a composition bias toward low complexity. Residues 59–74 (AKKKKKRKPKKKKKGG) are compositionally biased toward basic residues. H198 provides a ligand contact to substrate. A divalent metal cation contacts are provided by D218, D229, and H298. H306 contacts substrate. A divalent metal cation-binding residues include E331 and E426.

The protein belongs to the peptidase M24A family. Methionine aminopeptidase eukaryotic type 2 subfamily. The cofactor is Co(2+). It depends on Zn(2+) as a cofactor. Requires Mn(2+) as cofactor. Fe(2+) is required as a cofactor.

The protein resides in the cytoplasm. The enzyme catalyses Release of N-terminal amino acids, preferentially methionine, from peptides and arylamides.. Its function is as follows. Cotranslationally removes the N-terminal methionine from nascent proteins. The N-terminal methionine is often cleaved when the second residue in the primary sequence is small and uncharged (Met-Ala-, Cys, Gly, Pro, Ser, Thr, or Val). The sequence is that of Methionine aminopeptidase 2-2 from Aspergillus terreus (strain NIH 2624 / FGSC A1156).